The following is a 763-amino-acid chain: Phosphoglycerol transferase I (763 aa).

4 helical membrane passes run 1-21 (MSEL…AWKA), 26-46 (WWFA…ITLF), 77-97 (ILPG…LGWI), and 108-128 (FGYS…SPAF).

Belongs to the OpgB family.

It localises to the cell inner membrane. It carries out the reaction a phosphatidylglycerol + a membrane-derived-oligosaccharide D-glucose = a 1,2-diacyl-sn-glycerol + a membrane-derived-oligosaccharide 6-(glycerophospho)-D-glucose.. Its pathway is glycan metabolism; osmoregulated periplasmic glucan (OPG) biosynthesis. Transfers a phosphoglycerol residue from phosphatidylglycerol to the membrane-bound nascent glucan backbones. The sequence is that of Phosphoglycerol transferase I from Escherichia coli (strain SE11).